A 92-amino-acid polypeptide reads, in one-letter code: Small ribosomal subunit protein uS19c (92 aa).

Belongs to the universal ribosomal protein uS19 family.

It localises to the plastid. Its subcellular location is the chloroplast. Protein S19 forms a complex with S13 that binds strongly to the 16S ribosomal RNA. The polypeptide is Small ribosomal subunit protein uS19c (Nasturtium officinale (Watercress)).